A 185-amino-acid polypeptide reads, in one-letter code: Cuticle protein 18.6, isoform B (185 aa).

Tandem repeats lie at residues 21-24 (AAPA), 33-36 (AAPV), 41-44 (AAPV), 133-136 (AAPV), 139-142 (AAPV), and 150-153 (AAPV). The region spanning 64–134 (HPQYSFAYNV…KEAGAHPAAA (71 aa)) is the Chitin-binding type R&amp;R domain.

Its function is as follows. Component of the cuticle of migratory locust which contains more than 100 different structural proteins. This Locusta migratoria (Migratory locust) protein is Cuticle protein 18.6, isoform B.